Consider the following 260-residue polypeptide: DNA repair protein RecO (260 aa).

This sequence belongs to the RecO family.

Functionally, involved in DNA repair and RecF pathway recombination. This Paracidovorax citrulli (strain AAC00-1) (Acidovorax citrulli) protein is DNA repair protein RecO.